Consider the following 139-residue polypeptide: Nucleoside diphosphate kinase (139 aa).

ATP-binding residues include Lys10, Phe58, Arg86, Thr92, Arg103, and Asn113. The active-site Pros-phosphohistidine intermediate is the His116.

It belongs to the NDK family. As to quaternary structure, homotetramer. Mg(2+) is required as a cofactor.

The protein resides in the cytoplasm. It carries out the reaction a 2'-deoxyribonucleoside 5'-diphosphate + ATP = a 2'-deoxyribonucleoside 5'-triphosphate + ADP. It catalyses the reaction a ribonucleoside 5'-diphosphate + ATP = a ribonucleoside 5'-triphosphate + ADP. Its function is as follows. Major role in the synthesis of nucleoside triphosphates other than ATP. The ATP gamma phosphate is transferred to the NDP beta phosphate via a ping-pong mechanism, using a phosphorylated active-site intermediate. The protein is Nucleoside diphosphate kinase of Nitratidesulfovibrio vulgaris (strain DSM 19637 / Miyazaki F) (Desulfovibrio vulgaris).